A 707-amino-acid chain; its full sequence is Caprin-1 (707 aa).

Composition is skewed to low complexity over residues Met-1–Ser-15 and Gly-22–Gly-43. Residues Met-1–Gln-48 form a disordered region. Pro-2 is subject to N-acetylproline. A Phosphoserine modification is found at Ser-10. The stretch at Val-58–Asp-92 forms a coiled coil. Ser-113 carries the post-translational modification Phosphoserine. Residues Lys-123–Gln-151 adopt a coiled-coil conformation. Position 163 is an omega-N-methylarginine (Arg-163). Residues Leu-325–Gln-347 form a disordered region. A compositionally biased stretch (low complexity) spans Gln-326–Ser-335. Phosphoserine is present on residues Ser-333 and Ser-341. Residues Gln-358–Glu-379 are G3BP1-binding. 3 disordered regions span residues Glu-412–Ser-443, Pro-523–Glu-558, and Thr-570–Met-620. Positions Pro-431–Ser-443 are enriched in polar residues. Low complexity predominate over residues Gln-535–Glu-558. Polar residues predominate over residues His-572–Tyr-603. Tyr-623 bears the Phosphotyrosine mark. Arg-624 and Arg-631 each carry omega-N-methylarginine. 2 positions are modified to phosphotyrosine: Tyr-634 and Tyr-637. Omega-N-methylarginine is present on Arg-638. The segment covering Phe-641–Asn-655 has biased composition (polar residues). Positions Phe-641–Asn-707 are disordered. O-linked (GlcNAc) serine glycans are attached at residues Ser-642 and Ser-647. Phosphotyrosine is present on residues Tyr-649, Tyr-660, Tyr-663, and Tyr-668. 2 stretches are compositionally biased toward low complexity: residues Arg-674–Ala-684 and Asn-695–Asn-707. Arg-696 carries the post-translational modification Asymmetric dimethylarginine; alternate. Arg-696 is subject to Omega-N-methylarginine; alternate.

Belongs to the caprin family. In terms of assembly, may form homomultimers. Interacts with G3BP1; interaction is direct and promotes stress granule formation. Interacts with G3BP2; interaction is direct and promotes stress granule formation. Interacts with PQBP1. Interacts with DDX3X. Interacts (when phosphorylated by EPHA4) with FMR1; interaction with FMR1 promotes formation of a membraneless compartment. Tyrosine phosphorylation by EPHA4 promotes interaction with FMR1 and liquid-liquid phase separation (LLPS) for the formation of a membraneless compartment that concentrates mRNAs with associated regulatory factors. In terms of processing, O-glycosylated (O-GlcNAcylated), in a cell cycle-dependent manner. O-glycosylation by OGT inhibit ability to undergo liquid-liquid phase separation (LLPS). In terms of tissue distribution, expressed in hippocampal and neocortical pyramidal neurons, but not in Purkinje cells.

It localises to the cytoplasm. It is found in the cytoplasmic ribonucleoprotein granule. Its subcellular location is the cytosol. The protein localises to the cell projection. The protein resides in the dendrite. It localises to the lamellipodium. Ability to mediate liquid-liquid phase separation is regulated by ATP: moderate concentrations of ATP enhance phase separation, whereas high concentrations of ATP lead to inhibition of phase separation. Functionally, mRNA-binding protein that acts as a regulator of mRNAs transport, translation and/or stability, and which is involved in neurogenesis, synaptic plasticity in neurons and cell proliferation and migration in multiple cell types. Plays an essential role in cytoplasmic stress granule formation. Acts as an mRNA regulator by mediating formation of some phase-separated membraneless compartment: undergoes liquid-liquid phase separation upon binding to target mRNAs, leading to assemble mRNAs into cytoplasmic ribonucleoprotein granules that concentrate mRNAs with associated regulatory factors. Undergoes liquid-liquid phase separation following phosphorylation and interaction with FMR1, promoting formation of cytoplasmic ribonucleoprotein granules that concentrate mRNAs with factors that inhibit translation and mediate deadenylation of target mRNAs. In these cytoplasmic ribonucleoprotein granules, CAPRIN1 mediates recruitment of CNOT7 deadenylase, leading to mRNA deadenylation and degradation. Binds directly and selectively to MYC and CCND2 mRNAs. In neuronal cells, directly binds to several mRNAs associated with RNA granules, including BDNF, CAMK2A, CREB1, MAP2, NTRK2 mRNAs, as well as to GRIN1 and KPNB1 mRNAs, but not to rRNAs. The sequence is that of Caprin-1 (Caprin1) from Rattus norvegicus (Rat).